Here is a 328-residue protein sequence, read N- to C-terminus: MSHSLRVIFAGTPEFAAAALAAIHGAGFPVPLVLTQPDRPAGRGMKLQASPVKRYAQEHGLAVAQPPSLRRAGKYPEQAAAAIGQLRATPHDVMVVAAYGLILPQEVLDIPPLGCINIHASLLPRWRGAAPIHRAIEAGDAETGITLMQMDVGLDTGAMISETRTAISGDDTTATLHDRLAQDGAKLIVEALVELERTGRLAATPQPAEGVTYAEKIGKHEAALDWRRPAAVLARQVRAFDPFPGGVGTLEDGTSIKIWAAIPADTKAGGAPGTIAEVTPEGVVVACGEGALRLTQLQKPGGKRLPVREFLAGSTLAVGQRFQLPEAK.

121 to 124 (SLLP) contributes to the (6S)-5,6,7,8-tetrahydrofolate binding site.

It belongs to the Fmt family.

It carries out the reaction L-methionyl-tRNA(fMet) + (6R)-10-formyltetrahydrofolate = N-formyl-L-methionyl-tRNA(fMet) + (6S)-5,6,7,8-tetrahydrofolate + H(+). Functionally, attaches a formyl group to the free amino group of methionyl-tRNA(fMet). The formyl group appears to play a dual role in the initiator identity of N-formylmethionyl-tRNA by promoting its recognition by IF2 and preventing the misappropriation of this tRNA by the elongation apparatus. The protein is Methionyl-tRNA formyltransferase of Paraburkholderia xenovorans (strain LB400).